We begin with the raw amino-acid sequence, 433 residues long: Glutamyl-tRNA reductase (433 aa).

Residues 49-52 (TCNR), S109, 114-116 (EGQ), and Q120 contribute to the substrate site. C50 serves as the catalytic Nucleophile. 198 to 203 (GAGRMS) is an NADP(+) binding site.

The protein belongs to the glutamyl-tRNA reductase family. As to quaternary structure, homodimer.

It carries out the reaction (S)-4-amino-5-oxopentanoate + tRNA(Glu) + NADP(+) = L-glutamyl-tRNA(Glu) + NADPH + H(+). The protein operates within porphyrin-containing compound metabolism; protoporphyrin-IX biosynthesis; 5-aminolevulinate from L-glutamyl-tRNA(Glu): step 1/2. Its pathway is porphyrin-containing compound metabolism; chlorophyll biosynthesis. Its function is as follows. Catalyzes the NADPH-dependent reduction of glutamyl-tRNA(Glu) to glutamate 1-semialdehyde (GSA). The chain is Glutamyl-tRNA reductase from Prochlorococcus marinus subsp. pastoris (strain CCMP1986 / NIES-2087 / MED4).